The primary structure comprises 254 residues: Pyridoxine 5'-phosphate synthase (254 aa).

N12 provides a ligand contact to 3-amino-2-oxopropyl phosphate. Position 14–15 (14–15 (DH)) interacts with 1-deoxy-D-xylulose 5-phosphate. R23 provides a ligand contact to 3-amino-2-oxopropyl phosphate. The Proton acceptor role is filled by H48. 1-deoxy-D-xylulose 5-phosphate contacts are provided by R50 and H55. Residue E75 is the Proton acceptor of the active site. A 1-deoxy-D-xylulose 5-phosphate-binding site is contributed by T105. H199 serves as the catalytic Proton donor. 3-amino-2-oxopropyl phosphate contacts are provided by residues G200 and 221 to 222 (GF).

Belongs to the PNP synthase family. As to quaternary structure, homooctamer; tetramer of dimers.

It localises to the cytoplasm. It carries out the reaction 3-amino-2-oxopropyl phosphate + 1-deoxy-D-xylulose 5-phosphate = pyridoxine 5'-phosphate + phosphate + 2 H2O + H(+). Its pathway is cofactor biosynthesis; pyridoxine 5'-phosphate biosynthesis; pyridoxine 5'-phosphate from D-erythrose 4-phosphate: step 5/5. Its function is as follows. Catalyzes the complicated ring closure reaction between the two acyclic compounds 1-deoxy-D-xylulose-5-phosphate (DXP) and 3-amino-2-oxopropyl phosphate (1-amino-acetone-3-phosphate or AAP) to form pyridoxine 5'-phosphate (PNP) and inorganic phosphate. The sequence is that of Pyridoxine 5'-phosphate synthase from Rhodopseudomonas palustris (strain ATCC BAA-98 / CGA009).